A 90-amino-acid chain; its full sequence is Large ribosomal subunit protein bL27 (90 aa).

The tract at residues methionine 1–leucine 21 is disordered.

It belongs to the bacterial ribosomal protein bL27 family.

This Laribacter hongkongensis (strain HLHK9) protein is Large ribosomal subunit protein bL27.